The sequence spans 85 residues: UPF0181 protein YPTS_1774 (85 aa).

A compositionally biased stretch (basic and acidic residues) spans Asp57–Asp72. Residues Asp57 to Gly85 form a disordered region. Residues Glu73 to Gly85 show a composition bias toward acidic residues.

This sequence belongs to the UPF0181 family.

The protein is UPF0181 protein YPTS_1774 of Yersinia pseudotuberculosis serotype IB (strain PB1/+).